We begin with the raw amino-acid sequence, 448 residues long: tRNA-2-methylthio-N(6)-dimethylallyladenosine synthase (448 aa).

Positions Gly-3 to Asp-119 constitute an MTTase N-terminal domain. [4Fe-4S] cluster contacts are provided by Cys-12, Cys-49, Cys-82, Cys-156, Cys-160, and Cys-163. A Radical SAM core domain is found at Arg-142–Arg-374. A TRAM domain is found at Glu-377–Gly-440.

This sequence belongs to the methylthiotransferase family. MiaB subfamily. In terms of assembly, monomer. The cofactor is [4Fe-4S] cluster.

The protein localises to the cytoplasm. It catalyses the reaction N(6)-dimethylallyladenosine(37) in tRNA + (sulfur carrier)-SH + AH2 + 2 S-adenosyl-L-methionine = 2-methylsulfanyl-N(6)-dimethylallyladenosine(37) in tRNA + (sulfur carrier)-H + 5'-deoxyadenosine + L-methionine + A + S-adenosyl-L-homocysteine + 2 H(+). Catalyzes the methylthiolation of N6-(dimethylallyl)adenosine (i(6)A), leading to the formation of 2-methylthio-N6-(dimethylallyl)adenosine (ms(2)i(6)A) at position 37 in tRNAs that read codons beginning with uridine. The polypeptide is tRNA-2-methylthio-N(6)-dimethylallyladenosine synthase (Alkalilimnicola ehrlichii (strain ATCC BAA-1101 / DSM 17681 / MLHE-1)).